We begin with the raw amino-acid sequence, 91 residues long: uncharacterized protein (91 aa).

This sequence belongs to the UPF0440 family.

This is an uncharacterized protein from Methanothermobacter thermautotrophicus (strain ATCC 29096 / DSM 1053 / JCM 10044 / NBRC 100330 / Delta H) (Methanobacterium thermoautotrophicum).